We begin with the raw amino-acid sequence, 89 residues long: Elongation factor 1-beta (89 aa).

The protein belongs to the EF-1-beta/EF-1-delta family.

Promotes the exchange of GDP for GTP in EF-1-alpha/GDP, thus allowing the regeneration of EF-1-alpha/GTP that could then be used to form the ternary complex EF-1-alpha/GTP/AAtRNA. This chain is Elongation factor 1-beta, found in Methanococcus maripaludis (strain C6 / ATCC BAA-1332).